A 239-amino-acid chain; its full sequence is Protein-S-isoprenylcysteine O-methyltransferase (239 aa).

Over 1-23 (MHQDFQEDEHEYPDIRRNPLHEV) the chain is Cytoplasmic. Residues 24-44 (TMTSYILGILLGIFVGLFPQI) form a helical membrane-spanning segment. Over 45-47 (RFK) the chain is Lumenal. The helical transmembrane segment at 48-68 (NFNLFIIALSLFHFLEYYITA) threads the bilayer. The Cytoplasmic portion of the chain corresponds to 69-88 (KYNPLKVHSESFLLNNGKSY). A helical transmembrane segment spans residues 89–109 (MAAHSFAILECLVESFLFPDL). K110 is a topological domain (lumenal). Residues 111–131 (IFSYSLATKLCTVLGCLLVIL) form a helical membrane-spanning segment. Topologically, residues 132–175 (GQYTRTIAMHTAGHSFSHIVKTKKESDHVLVKTGVYSWSRHPSY) are cytoplasmic. S-adenosyl-L-methionine is bound by residues 159–162 (HVLV), Y167, and 172–175 (HPSY). The segment at residues 176–206 (LGFFWWAIGTQLLLLNPLSLVIFIFVLWKFF) is an intramembrane region (helical). At 207 to 239 (SDRIRVEEKYLIEFFSAEYIEYKNKVGVGIPFI) the chain is on the cytoplasmic side. Substrate is bound at residue R209. E213 serves as a coordination point for S-adenosyl-L-methionine.

Belongs to the class VI-like SAM-binding methyltransferase superfamily. Isoprenylcysteine carboxyl methyltransferase family.

It localises to the endoplasmic reticulum membrane. The catalysed reaction is [protein]-C-terminal S-[(2E,6E)-farnesyl]-L-cysteine + S-adenosyl-L-methionine = [protein]-C-terminal S-[(2E,6E)-farnesyl]-L-cysteine methyl ester + S-adenosyl-L-homocysteine. Functionally, mediates C-terminal methylation of the isoprenylated C-terminal cysteine in A-factor mating pheromone and Ras proteins. Does not have a preference for the farnesyl or geranylgeranyl moieties in the model substrates N-acetyl-S-farnesyl-L-cysteine (AFC) and N-acetyl-S-geranylgeranyl-L-cysteine (AGGC) in vitro. The polypeptide is Protein-S-isoprenylcysteine O-methyltransferase (STE14) (Saccharomyces cerevisiae (strain ATCC 204508 / S288c) (Baker's yeast)).